The primary structure comprises 459 residues: Cysteine--tRNA ligase (459 aa).

C31 contributes to the Zn(2+) binding site. Positions 33–43 match the 'HIGH' region motif; it reads PTVYYNPHIGN. 3 residues coordinate Zn(2+): C216, H241, and E245. The short motif at 274 to 278 is the 'KMSKS' region element; that stretch reads KMSKS. Residue K277 coordinates ATP.

This sequence belongs to the class-I aminoacyl-tRNA synthetase family. In terms of assembly, monomer. Zn(2+) serves as cofactor.

It is found in the cytoplasm. It carries out the reaction tRNA(Cys) + L-cysteine + ATP = L-cysteinyl-tRNA(Cys) + AMP + diphosphate. This chain is Cysteine--tRNA ligase, found in Rickettsia rickettsii (strain Iowa).